The following is a 350-amino-acid chain: Probable dual-specificity RNA methyltransferase RlmN (350 aa).

Glu-93 (proton acceptor) is an active-site residue. The 229-residue stretch at 99 to 327 folds into the Radical SAM core domain; the sequence is SSKRLTVCVS…VSVRYSRGVQ (229 aa). Cys-106 and Cys-332 are joined by a disulfide. [4Fe-4S] cluster-binding residues include Cys-113, Cys-117, and Cys-120. S-adenosyl-L-methionine-binding positions include 160-161, Ser-190, 213-215, and Asn-289; these read GE and SLH. The active-site S-methylcysteine intermediate is the Cys-332.

This sequence belongs to the radical SAM superfamily. RlmN family. [4Fe-4S] cluster serves as cofactor.

Its subcellular location is the cytoplasm. The enzyme catalyses adenosine(2503) in 23S rRNA + 2 reduced [2Fe-2S]-[ferredoxin] + 2 S-adenosyl-L-methionine = 2-methyladenosine(2503) in 23S rRNA + 5'-deoxyadenosine + L-methionine + 2 oxidized [2Fe-2S]-[ferredoxin] + S-adenosyl-L-homocysteine. It catalyses the reaction adenosine(37) in tRNA + 2 reduced [2Fe-2S]-[ferredoxin] + 2 S-adenosyl-L-methionine = 2-methyladenosine(37) in tRNA + 5'-deoxyadenosine + L-methionine + 2 oxidized [2Fe-2S]-[ferredoxin] + S-adenosyl-L-homocysteine. Its function is as follows. Specifically methylates position 2 of adenine 2503 in 23S rRNA and position 2 of adenine 37 in tRNAs. This chain is Probable dual-specificity RNA methyltransferase RlmN, found in Synechocystis sp. (strain ATCC 27184 / PCC 6803 / Kazusa).